We begin with the raw amino-acid sequence, 190 residues long: Cytoglobin (190 aa).

The Globin domain occupies 18 to 167; the sequence is ELSEAERKAV…IYSHVTAAYK (150 aa). Residues C38 and C83 are joined by a disulfide bond. Heme b-binding residues include H81 and H113.

Belongs to the globin family. In terms of assembly, monomeric. Homodimer; disulfide-linked in vitro. Also homooligomeric in vitro. In terms of processing, the formation of an intramolecular disulfide bond between cysteines Cys-38 and Cys-83 specifically enhances the nitrite reductase activity. As to expression, widely expressed. Highest expression in heart, stomach, bladder and small intestine.

The protein localises to the cytoplasm. It is found in the nucleus. It catalyses the reaction Fe(II)-heme b-[protein] + nitric oxide + O2 = Fe(III)-heme b-[protein] + nitrate. The catalysed reaction is Fe(III)-heme b-[protein] + nitric oxide + H2O = Fe(II)-heme b-[protein] + nitrite + 2 H(+). The enzyme catalyses 2 superoxide + 2 H(+) = H2O2 + O2. It carries out the reaction H2O2 + AH2 = A + 2 H2O. With respect to regulation, the nitric oxide dioxygenase activity is activated by a reducing system composed of cytochrome b5, its upstream reductase CYB5R3 and NADH. Its function is as follows. Probable multifunctional globin with a hexacoordinated heme iron required for the catalysis of various reactions depending on redox condition of the cell as well as oxygen availability. Has a nitric oxide dioxygenase (NOD) activity and is most probably involved in cell-mediated and oxygen-dependent nitric oxide consumption. By scavenging this second messenger may regulate several biological processes including endothelium-mediated vasodilation and vascular tone. Under normoxic conditions functions as a nitric oxide dioxygenase (NOD) but under hypoxic conditions the globin may switch its function to that of a nitrite (NO2) reductase (NiR), generating nitric oxide. Could also have peroxidase and superoxide dismutase activities, detoxifying reactive oxygen species and protecting cells against oxidative stress. Also binds dioxygen with low affinity and could function as an oxygen sensor but has probably no function as a respiratory oxygen carrier. The protein is Cytoglobin of Homo sapiens (Human).